Consider the following 169-residue polypeptide: Cell division inhibitor SulA (169 aa).

Positions 1–22 (MHTSIYANRSTSFSPSAGNDTQ) are disordered. The segment at 106–112 (ALRTGNY) is ftsZ binding. Residues 162–169 (KIHSNLYH) form a lon protease binding region.

Belongs to the SulA family. Interacts with FtsZ. Is rapidly cleaved and degraded by the Lon protease once DNA damage is repaired.

Functionally, component of the SOS system and an inhibitor of cell division. Accumulation of SulA causes rapid cessation of cell division and the appearance of long, non-septate filaments. In the presence of GTP, binds a polymerization-competent form of FtsZ in a 1:1 ratio, thus inhibiting FtsZ polymerization and therefore preventing it from participating in the assembly of the Z ring. This mechanism prevents the premature segregation of damaged DNA to daughter cells during cell division. This Enterobacter sp. (strain 638) protein is Cell division inhibitor SulA.